We begin with the raw amino-acid sequence, 199 residues long: NAD(P)H dehydrogenase (quinone) (199 aa).

In terms of domain architecture, Flavodoxin-like spans 4–190 (VLVLYYSTYG…AGARHQGELV (187 aa)). Residues 10-15 (STYGHL) and 78-80 (TRF) contribute to the FMN site. Y12 provides a ligand contact to NAD(+). W98 contributes to the substrate binding site. Residues 113-119 (STATQHG) and H134 each bind FMN.

It belongs to the WrbA family. Requires FMN as cofactor.

It catalyses the reaction a quinone + NADH + H(+) = a quinol + NAD(+). It carries out the reaction a quinone + NADPH + H(+) = a quinol + NADP(+). The protein is NAD(P)H dehydrogenase (quinone) of Azorhizobium caulinodans (strain ATCC 43989 / DSM 5975 / JCM 20966 / LMG 6465 / NBRC 14845 / NCIMB 13405 / ORS 571).